Reading from the N-terminus, the 472-residue chain is Ribosomal protein uS12 methylthiotransferase RimO (472 aa).

The region spanning 33–143 is the MTTase N-terminal domain; it reads NRIGFVSLGC…VLKHVHKYVP (111 aa). [4Fe-4S] cluster is bound by residues C42, C78, C107, C175, C179, and C182. In terms of domain architecture, Radical SAM core spans 161–398; it reads LTPKHYAYLK…MEVQAEISAE (238 aa). The TRAM domain occupies 401–467; sequence ARFVGRTLDI…EHDLWAEVVD (67 aa).

It belongs to the methylthiotransferase family. RimO subfamily. [4Fe-4S] cluster serves as cofactor.

It localises to the cytoplasm. It carries out the reaction L-aspartate(89)-[ribosomal protein uS12]-hydrogen + (sulfur carrier)-SH + AH2 + 2 S-adenosyl-L-methionine = 3-methylsulfanyl-L-aspartate(89)-[ribosomal protein uS12]-hydrogen + (sulfur carrier)-H + 5'-deoxyadenosine + L-methionine + A + S-adenosyl-L-homocysteine + 2 H(+). Its function is as follows. Catalyzes the methylthiolation of an aspartic acid residue of ribosomal protein uS12. The protein is Ribosomal protein uS12 methylthiotransferase RimO of Shewanella baltica (strain OS195).